Here is a 410-residue protein sequence, read N- to C-terminus: Regulator of microtubule dynamics protein 2 (410 aa).

A helical membrane pass occupies residues 9–28 (LILGIMVGTAGISLLLLWYH). Residue S51 is modified to Phosphoserine. Residues 68 to 110 (FQERQLQILEKLNELLTNMEELKEEIRFLKEAIPKLEEYIQDE) adopt a coiled-coil conformation. Residue S121 is modified to Phosphoserine. Residues 122–131 (PQHRARKRRL) show a composition bias toward basic residues. A disordered region spans residues 122–164 (PQHRARKRRLPTIQSSATSNSSEEAESEGGYITANTDTEEQSF). The residue at position 139 (T139) is a Phosphothreonine. Y152 bears the Phosphotyrosine mark. 2 positions are modified to phosphothreonine: T154 and T157.

It belongs to the RMDN family. As to quaternary structure, interacts with microtubules.

Its subcellular location is the membrane. The protein resides in the cytoplasm. It is found in the cytoskeleton. The protein localises to the spindle. It localises to the spindle pole. The polypeptide is Regulator of microtubule dynamics protein 2 (RMDN2) (Homo sapiens (Human)).